The primary structure comprises 308 residues: Ribosomal RNA large subunit methyltransferase F (308 aa).

The protein belongs to the methyltransferase superfamily. METTL16/RlmF family.

It is found in the cytoplasm. It catalyses the reaction adenosine(1618) in 23S rRNA + S-adenosyl-L-methionine = N(6)-methyladenosine(1618) in 23S rRNA + S-adenosyl-L-homocysteine + H(+). Its function is as follows. Specifically methylates the adenine in position 1618 of 23S rRNA. The chain is Ribosomal RNA large subunit methyltransferase F from Salmonella schwarzengrund (strain CVM19633).